A 1003-amino-acid chain; its full sequence is MGACSSKAQHQTRDPEPREQQAAQEQKSTGPSGAPNDAPAPAEAERKMSGSSATAPKGEMPTASTGTPEQQQQQQQQQQQQQEQQQHPEHQQSEKQQQHGEEQQQERKPSQQQQNEEAAAPHKHGGERKVQKAIKQQEDTQAEDARLLGHLEKREKTPSDLSLIRDSLSTNLVCSSLNDAEVEALANAVEFFTFKKGDVVTKQGESGSYFFIVHSGEFEVIVNDKVVNKILTGQAFGEISLIHNSARTATIKTLSEDAALWGVQRQVFRETLKQLSSRNFAENRQFLASVKFFEMLTEAQKNVITNALVVQSFQPGQAIVKEGEKGDVLYILKSGKALVSIKNKEVRVLQRGEYFGERALLYDEPRSATITAEEPTVCVSIGRDLLDRVLGNLQHVLFRNIMLEALQQSKVFASFPTEQLSRLIGSVVVKDYPENYIILDRENRTRASASALFSAQGVRFFFVLEGEVSVFAYKDKSSSSSSSSSSSSSSSSAEGEMELHLIDTLKRGQAFGDEYVLSPNKPFAHCVKSNGPTKLALLTASALTATLGGQDIDETLDYNNKLAITKKMYIFRYLSEQQTQTLIKAFKTVRYTQGESIIREGEIGSRFFIIKLGEVVILKGEKRVRTLGRHDYFGERALLHDERRSATVAANSPEVDLWVVDKDVFLQIVKGPMLTHLEERIRMQDTKVEFKDLNVVRVVGRGTFGTVKLVQHIPTQMRYALKCVSRKSVVALNQQDHIRLEREIMAENDHPFIIRLVRTFRDKEFLYFLTELVTGGELYDAIRKLGLLGRYQAQFYLASIVLAIEYLHERNIAYRDLKPENILLDSQGYVKLIDFGCAKKMQGRAYTLVGTPHYMAPEVILGKGYTLTADTWAFGVCLYEFMCGPLPFGNDAEDQLEIFRDILAGKLIFPHYVTDQDAINLMKRLLCRLPEVRIGCSINGYKDIKEHAFFSDFDWDRLAGRDLSPPLLPKGEIYAEDAEEGGLDIEEDEGIELEDEYEWDKDF.

The tract at residues 1–141 (MGACSSKAQH…KAIKQQEDTQ (141 aa)) is disordered. Gly2 carries the N-myristoyl glycine lipid modification. Cys4 is lipidated: S-palmitoyl cysteine. Residues 69-85 (EQQQQQQQQQQQQQEQQ) are compositionally biased toward low complexity. Composition is skewed to basic and acidic residues over residues 86 to 109 (QHPE…ERKP) and 127 to 141 (ERKV…EDTQ). 4 cNMP-binding domain regions span residues 173-289 (VCSS…FLAS), 292-391 (FFEM…RVLG), 411-548 (VFAS…ATLG), and 570-669 (IFRY…LQIV). 3',5'-cyclic GMP-binding residues include Gly237, Glu238, Arg247, and Thr248. Residues Arg625, Gly634, Glu635, Ala637, Arg644, and Ser645 each coordinate 3',5'-cyclic GMP. Residues 693-950 (LNVVRVVGRG…YKDIKEHAFF (258 aa)) enclose the Protein kinase domain. Residues 699–707 (VGRGTFGTV) and Lys722 contribute to the ATP site. Asp816 acts as the Proton acceptor in catalysis. In terms of domain architecture, AGC-kinase C-terminal spans 951–1003 (SDFDWDRLAGRDLSPPLLPKGEIYAEDAEEGGLDIEEDEGIELEDEYEWDKDF).

It belongs to the protein kinase superfamily. AGC Ser/Thr protein kinase family. cGMP subfamily. In terms of assembly, monomer. The cofactor is Mg(2+).

It is found in the cell membrane. Its subcellular location is the cytoplasm. The enzyme catalyses L-seryl-[protein] + ATP = O-phospho-L-seryl-[protein] + ADP + H(+). It catalyses the reaction L-threonyl-[protein] + ATP = O-phospho-L-threonyl-[protein] + ADP + H(+). With respect to regulation, activated by cGMP. The cGMP-binding domains acts cooperatively to activate PKG. Inhibited by the antiparasitic small molecule 4-[2-(4-fluorophenyl)-5-(1-methylpiperidine-4-yl)-1Hpyrrol- 3-yl]pyridine (compound 1). Serine/threonine protein kinase which acts as a downstream effector of the second messenger cGMP. This Eimeria tenella (Coccidian parasite) protein is cGMP-dependent protein kinase.